Reading from the N-terminus, the 150-residue chain is Transcription antitermination protein NusB (150 aa).

Belongs to the NusB family.

Involved in transcription antitermination. Required for transcription of ribosomal RNA (rRNA) genes. Binds specifically to the boxA antiterminator sequence of the ribosomal RNA (rrn) operons. This is Transcription antitermination protein NusB from Saccharophagus degradans (strain 2-40 / ATCC 43961 / DSM 17024).